The primary structure comprises 157 residues: 6,7-dimethyl-8-ribityllumazine synthase (157 aa).

Residues phenylalanine 22, 56 to 58 (AME), and 80 to 82 (AVV) contribute to the 5-amino-6-(D-ribitylamino)uracil site. 85-86 (ET) contacts (2S)-2-hydroxy-3-oxobutyl phosphate. The Proton donor role is filled by histidine 88. Phenylalanine 113 provides a ligand contact to 5-amino-6-(D-ribitylamino)uracil. Arginine 127 lines the (2S)-2-hydroxy-3-oxobutyl phosphate pocket.

This sequence belongs to the DMRL synthase family.

The enzyme catalyses (2S)-2-hydroxy-3-oxobutyl phosphate + 5-amino-6-(D-ribitylamino)uracil = 6,7-dimethyl-8-(1-D-ribityl)lumazine + phosphate + 2 H2O + H(+). The protein operates within cofactor biosynthesis; riboflavin biosynthesis; riboflavin from 2-hydroxy-3-oxobutyl phosphate and 5-amino-6-(D-ribitylamino)uracil: step 1/2. Its function is as follows. Catalyzes the formation of 6,7-dimethyl-8-ribityllumazine by condensation of 5-amino-6-(D-ribitylamino)uracil with 3,4-dihydroxy-2-butanone 4-phosphate. This is the penultimate step in the biosynthesis of riboflavin. This chain is 6,7-dimethyl-8-ribityllumazine synthase, found in Levilactobacillus brevis (strain ATCC 367 / BCRC 12310 / CIP 105137 / JCM 1170 / LMG 11437 / NCIMB 947 / NCTC 947) (Lactobacillus brevis).